A 264-amino-acid polypeptide reads, in one-letter code: MKTLWMVLCALARLWPGALAGCAEAGRCCPGRDPACFARGWRLDRVYGTCFCDQACRLTGDCCFDYDRACPARPCFVGEWSPWSGCAGQCQPTTRVRRRSVRQEPLNGGAPCPPLEERAGCLEYSSSQSQDCGHSFVPAFITSSVFNKKRIIQAVSPQWSTHTKDAGYCMEFKTESLTPHCALVNSPLTRWMQYLREGYTVCVDCQPPAMNSVSLRCSGDGLDSDGNQTLRWQAIGNPRCQGTWKKVRRVEQCSCPDVHRFIFI.

Positions 1 to 20 (MKTLWMVLCALARLWPGALA) are cleaved as a signal peptide. Residues 24-75 (EAGRCCPGRDPACFARGWRLDRVYGTCFCDQACRLTGDCCFDYDRACPARPC) enclose the SMB domain. Disulfide bonds link Cys28–Cys36, Cys28–Cys52, Cys36–Cys70, Cys50–Cys52, Cys50–Cys63, Cys56–Cys62, and Cys63–Cys70. The region spanning 74 to 125 (PCFVGEWSPWSGCAGQCQPTTRVRRRSVRQEPLNGGAPCPPLEERAGCLEYS) is the TSP type-1 domain. An N-linked (GlcNAc...) asparagine glycan is attached at Asn227.

Belongs to the thrombospondin family.

Its subcellular location is the secreted. It is found in the extracellular space. It localises to the extracellular matrix. The protein is Somatomedin-B and thrombospondin type-1 domain-containing protein (Sbspon) of Mus musculus (Mouse).